The following is a 248-amino-acid chain: Pyridoxine 5'-phosphate synthase (248 aa).

Asparagine 12 is a binding site for 3-amino-2-oxopropyl phosphate. Position 14-15 (14-15 (DH)) interacts with 1-deoxy-D-xylulose 5-phosphate. 3-amino-2-oxopropyl phosphate is bound at residue arginine 23. Catalysis depends on histidine 48, which acts as the Proton acceptor. 1-deoxy-D-xylulose 5-phosphate is bound by residues arginine 50 and histidine 55. Glutamate 75 (proton acceptor) is an active-site residue. Threonine 105 contributes to the 1-deoxy-D-xylulose 5-phosphate binding site. Histidine 196 acts as the Proton donor in catalysis. Residues glycine 197 and 218–219 (GH) each bind 3-amino-2-oxopropyl phosphate.

This sequence belongs to the PNP synthase family. As to quaternary structure, homooctamer; tetramer of dimers.

It localises to the cytoplasm. It catalyses the reaction 3-amino-2-oxopropyl phosphate + 1-deoxy-D-xylulose 5-phosphate = pyridoxine 5'-phosphate + phosphate + 2 H2O + H(+). It participates in cofactor biosynthesis; pyridoxine 5'-phosphate biosynthesis; pyridoxine 5'-phosphate from D-erythrose 4-phosphate: step 5/5. Catalyzes the complicated ring closure reaction between the two acyclic compounds 1-deoxy-D-xylulose-5-phosphate (DXP) and 3-amino-2-oxopropyl phosphate (1-amino-acetone-3-phosphate or AAP) to form pyridoxine 5'-phosphate (PNP) and inorganic phosphate. The protein is Pyridoxine 5'-phosphate synthase of Pseudomonas aeruginosa (strain LESB58).